We begin with the raw amino-acid sequence, 362 residues long: Heat-inducible transcription repressor HrcA (362 aa).

This sequence belongs to the HrcA family.

In terms of biological role, negative regulator of class I heat shock genes (grpE-dnaK-dnaJ and groELS operons). Prevents heat-shock induction of these operons. The sequence is that of Heat-inducible transcription repressor HrcA from Rhodopseudomonas palustris (strain BisB18).